We begin with the raw amino-acid sequence, 95 residues long: Pyrimidine/purine nucleoside phosphorylase (95 aa).

Belongs to the nucleoside phosphorylase PpnP family.

The enzyme catalyses a purine D-ribonucleoside + phosphate = a purine nucleobase + alpha-D-ribose 1-phosphate. It catalyses the reaction adenosine + phosphate = alpha-D-ribose 1-phosphate + adenine. It carries out the reaction cytidine + phosphate = cytosine + alpha-D-ribose 1-phosphate. The catalysed reaction is guanosine + phosphate = alpha-D-ribose 1-phosphate + guanine. The enzyme catalyses inosine + phosphate = alpha-D-ribose 1-phosphate + hypoxanthine. It catalyses the reaction thymidine + phosphate = 2-deoxy-alpha-D-ribose 1-phosphate + thymine. It carries out the reaction uridine + phosphate = alpha-D-ribose 1-phosphate + uracil. The catalysed reaction is xanthosine + phosphate = alpha-D-ribose 1-phosphate + xanthine. Its function is as follows. Catalyzes the phosphorolysis of diverse nucleosides, yielding D-ribose 1-phosphate and the respective free bases. Can use uridine, adenosine, guanosine, cytidine, thymidine, inosine and xanthosine as substrates. Also catalyzes the reverse reactions. The protein is Pyrimidine/purine nucleoside phosphorylase of Edwardsiella ictaluri (strain 93-146).